Consider the following 358-residue polypeptide: Carbohydrate sulfotransferase 10 (358 aa).

The Cytoplasmic segment spans residues 1–6 (MHHQWL). The chain crosses the membrane as a helical; Signal-anchor for type II membrane protein span at residues 7-27 (LLAACFWVIFMFMVASKFITL). The Lumenal portion of the chain corresponds to 28–358 (TFKDPDGYGA…GYRVPDFLLN (331 aa)). An N-linked (GlcNAc...) asparagine glycan is attached at N101. Residues 129–135 (PKVGNTQ) and 191–199 (RDPFERLIS) each bind 3'-phosphoadenylyl sulfate. A glycan (N-linked (GlcNAc...) asparagine) is linked at N318.

The protein belongs to the sulfotransferase 2 family. In terms of tissue distribution, predominantly expressed in hypertrophic, prehypertrophic and proliferative chondrocytes at E12 but is down-regulated in epiphyseal chondrocytes.

The protein resides in the golgi apparatus membrane. Its function is as follows. Catalyzes the transfer of sulfate to position 3 of terminal glucuronic acid of both protein- and lipid-linked oligosaccharides. Participates in biosynthesis of HNK-1 carbohydrate structure, a sulfated glucuronyl-lactosaminyl residue carried by many neural recognition molecules, which is involved in cell interactions during ontogenetic development and in synaptic plasticity in the adult. This chain is Carbohydrate sulfotransferase 10 (CHST10), found in Gallus gallus (Chicken).